The primary structure comprises 302 residues: Sulfate adenylyltransferase subunit 2 (302 aa).

It belongs to the PAPS reductase family. CysD subfamily. As to quaternary structure, heterodimer composed of CysD, the smaller subunit, and CysN.

It catalyses the reaction sulfate + ATP + H(+) = adenosine 5'-phosphosulfate + diphosphate. It functions in the pathway sulfur metabolism; hydrogen sulfide biosynthesis; sulfite from sulfate: step 1/3. In terms of biological role, with CysN forms the ATP sulfurylase (ATPS) that catalyzes the adenylation of sulfate producing adenosine 5'-phosphosulfate (APS) and diphosphate, the first enzymatic step in sulfur assimilation pathway. APS synthesis involves the formation of a high-energy phosphoric-sulfuric acid anhydride bond driven by GTP hydrolysis by CysN coupled to ATP hydrolysis by CysD. The chain is Sulfate adenylyltransferase subunit 2 from Xanthomonas euvesicatoria pv. vesicatoria (strain 85-10) (Xanthomonas campestris pv. vesicatoria).